Here is a 1191-residue protein sequence, read N- to C-terminus: Rho GTPase-activating protein 20 (1191 aa).

The span at 1-23 shows a compositional bias: polar residues; sequence MEAMSPQQETLGGQPGRSSSLTG. A disordered region spans residues 1–45; the sequence is MEAMSPQQETLGGQPGRSSSLTGVSRLAGGSCTKKKMKTLAERRR. Ser-46 carries the phosphoserine modification. The 103-residue stretch at 78-180 folds into the PH domain; sequence SLVCSNRTLL…EQKDKWLSLL (103 aa). A Ras-associating domain is found at 194 to 295; it reads KSIPLKIFAK…TPFNLQEPFL (102 aa). Positions 365–551 constitute a Rho-GAP domain; it reads ISLPNICEND…FLIENCLRIF (187 aa). Ser-704 and Ser-730 each carry phosphoserine. Disordered stretches follow at residues 768 to 791, 926 to 1014, 1052 to 1123, and 1140 to 1191; these read SKKN…NHVK, RLNL…SRPA, KKAK…RHCS, and HEEI…TKDI. Residues 934-961 are compositionally biased toward low complexity; that stretch reads SYSSLSSPGTSPSGSSVSSQDSAFSQIS. Composition is skewed to polar residues over residues 962 to 981 and 1103 to 1116; these read EHSV…TFQA and PVQS…SPFQ. Residues 1182–1191 show a composition bias toward basic and acidic residues; sequence IEDRYLTKDI.

Expressed predominantly in the brain. Lower expression is found in lymph nodes.

Its function is as follows. GTPase activator for the Rho-type GTPases by converting them to an inactive GDP-bound state. The polypeptide is Rho GTPase-activating protein 20 (ARHGAP20) (Homo sapiens (Human)).